Reading from the N-terminus, the 158-residue chain is Cyclic pyranopterin monophosphate synthase (158 aa).

Residues Leu76–His78 and Met114–Glu115 contribute to the substrate site. Asp129 is an active-site residue.

This sequence belongs to the MoaC family. As to quaternary structure, homohexamer; trimer of dimers.

The enzyme catalyses (8S)-3',8-cyclo-7,8-dihydroguanosine 5'-triphosphate = cyclic pyranopterin phosphate + diphosphate. The protein operates within cofactor biosynthesis; molybdopterin biosynthesis. Its function is as follows. Catalyzes the conversion of (8S)-3',8-cyclo-7,8-dihydroguanosine 5'-triphosphate to cyclic pyranopterin monophosphate (cPMP). The protein is Cyclic pyranopterin monophosphate synthase of Shewanella piezotolerans (strain WP3 / JCM 13877).